Consider the following 453-residue polypeptide: Kynureninase (453 aa).

Pyridoxal 5'-phosphate contacts are provided by residues Leu114, Thr115, 142–145, Asp232, His235, and Tyr257; that span reads FPSD. Lys258 carries the N6-(pyridoxal phosphate)lysine modification. Trp286 is a pyridoxal 5'-phosphate binding site.

The protein belongs to the kynureninase family. In terms of assembly, homodimer. The cofactor is pyridoxal 5'-phosphate.

Its subcellular location is the cytoplasm. It carries out the reaction L-kynurenine + H2O = anthranilate + L-alanine + H(+). The enzyme catalyses 3-hydroxy-L-kynurenine + H2O = 3-hydroxyanthranilate + L-alanine + H(+). It functions in the pathway amino-acid degradation; L-kynurenine degradation; L-alanine and anthranilate from L-kynurenine: step 1/1. Its pathway is cofactor biosynthesis; NAD(+) biosynthesis; quinolinate from L-kynurenine: step 2/3. Its function is as follows. Catalyzes the cleavage of L-kynurenine (L-Kyn) and L-3-hydroxykynurenine (L-3OHKyn) into anthranilic acid (AA) and 3-hydroxyanthranilic acid (3-OHAA), respectively. This is Kynureninase from Cryptococcus neoformans var. neoformans serotype D (strain JEC21 / ATCC MYA-565) (Filobasidiella neoformans).